The chain runs to 285 residues: Nurim (285 aa).

Residues 1–16 (MSANVQVSGQLSSGPS) lie on the Nuclear side of the membrane. The helical transmembrane segment at 17–44 (LPACIVLSAVSLLCFVAGFGTGAEFVRF) threads the bilayer. The Perinuclear space segment spans residues 45–74 (LSFGAIFRNISGGLDGEIPLTWSEAIRNTQ). Residues 75–96 (FQCCIGIDIGLLFLFVLQHSLM) form a helical membrane-spanning segment. Over 97 to 113 (AWTAVKKNVLHVFGVLQ) the chain is Nuclear. The chain crosses the membrane as a helical span at residues 114–130 (RSIYILCTALSLQVLMR). Topologically, residues 131-149 (FWQPCPHGPYLWNVSSDPW) are perinuclear space. Residues 150–180 (SAWLPLLCALVHTISWLLIFSVLLIFDYAEL) traverse the membrane as a helical segment. Residues 181 to 207 (MGIKQVYYFCLGMGDPLSHKSPRVARL) are Nuclear-facing. Residues 208-226 (YAHLRHPIYLELLLILWAV) form a helical membrane-spanning segment. Residues 227–232 (PCLPPD) are Perinuclear space-facing. A helical transmembrane segment spans residues 233–250 (RLILAIFFTLYLSLVHRL). The Nuclear portion of the chain corresponds to 251-285 (DVQDYAYLRSQLEKKFLLFSREEASAVGGQIRKNN).

Belongs to the nurim family.

It is found in the nucleus inner membrane. The protein is Nurim (nrm) of Xenopus laevis (African clawed frog).